A 122-amino-acid polypeptide reads, in one-letter code: Large ribosomal subunit protein uL18 (122 aa).

This sequence belongs to the universal ribosomal protein uL18 family. As to quaternary structure, part of the 50S ribosomal subunit; part of the 5S rRNA/L5/L18/L25 subcomplex. Contacts the 5S and 23S rRNAs.

In terms of biological role, this is one of the proteins that bind and probably mediate the attachment of the 5S RNA into the large ribosomal subunit, where it forms part of the central protuberance. This Mycobacterium avium (strain 104) protein is Large ribosomal subunit protein uL18.